Here is a 146-residue protein sequence, read N- to C-terminus: Large ribosomal subunit protein bL17 (146 aa).

The tract at residues 118-146 (RDPAAKGQDSGPKPEVASDEDEAGEAAAA) is disordered. Positions 134 to 146 (ASDEDEAGEAAAA) are enriched in acidic residues.

It belongs to the bacterial ribosomal protein bL17 family. Part of the 50S ribosomal subunit. Contacts protein L32.

The chain is Large ribosomal subunit protein bL17 from Acidiphilium cryptum (strain JF-5).